A 69-amino-acid polypeptide reads, in one-letter code: Metallothionein-like protein CRS5 (69 aa).

It belongs to the metallothionein superfamily. Type 13 family.

In terms of biological role, critical role in copper (specific) homeostasis and detoxification. May protect by directly chelating and sequestering copper ions. This chain is Metallothionein-like protein CRS5 (CRS5), found in Saccharomyces cerevisiae (strain RM11-1a) (Baker's yeast).